Reading from the N-terminus, the 815-residue chain is Cell division control protein 48 homolog D (815 aa).

Position 2 is an N-acetylalanine (Ala-2). At Ser-42 the chain carries Phosphoserine. ATP-binding positions include 249-256 (GPPGSGKT) and 522-529 (GPPGCGKT). At Ser-720 the chain carries Phosphoserine. A disordered region spans residues 772–815 (GSEFRFPDAPTGTTGAFPGAAATVGGVDPFATSGGAADDDDLYS). A compositionally biased stretch (low complexity) spans 780–798 (APTGTTGAFPGAAATVGGV).

This sequence belongs to the AAA ATPase family.

It is found in the nucleus. The protein resides in the cytoplasm. Its subcellular location is the cytoskeleton. The protein localises to the phragmoplast. In terms of biological role, probably functions in cell division and growth processes. Interacts with certain SNAREs as part of specialized membrane fusion events where vesicles from the same organelle fuse (homotypic fusion). The sequence is that of Cell division control protein 48 homolog D (CDC48D) from Arabidopsis thaliana (Mouse-ear cress).